Reading from the N-terminus, the 68-residue chain is uncharacterized protein (68 aa).

This is an uncharacterized protein from Haemophilus influenzae (strain ATCC 51907 / DSM 11121 / KW20 / Rd).